The chain runs to 864 residues: Leucine--tRNA ligase (864 aa).

Residues 42 to 52 (PYPSGKLHMGH) carry the 'HIGH' region motif. The 'KMSKS' region motif lies at 624 to 628 (KMSKS). Lysine 627 provides a ligand contact to ATP.

It belongs to the class-I aminoacyl-tRNA synthetase family.

The protein localises to the cytoplasm. It catalyses the reaction tRNA(Leu) + L-leucine + ATP = L-leucyl-tRNA(Leu) + AMP + diphosphate. This Burkholderia pseudomallei (strain 1710b) protein is Leucine--tRNA ligase.